Consider the following 1401-residue polypeptide: DNA-directed RNA polymerase subunit beta (1401 aa).

This sequence belongs to the RNA polymerase beta chain family. As to quaternary structure, the RNAP catalytic core consists of 2 alpha, 1 beta, 1 beta' and 1 omega subunit. When a sigma factor is associated with the core the holoenzyme is formed, which can initiate transcription.

It catalyses the reaction RNA(n) + a ribonucleoside 5'-triphosphate = RNA(n+1) + diphosphate. Functionally, DNA-dependent RNA polymerase catalyzes the transcription of DNA into RNA using the four ribonucleoside triphosphates as substrates. This is DNA-directed RNA polymerase subunit beta from Zymomonas mobilis subsp. mobilis (strain ATCC 31821 / ZM4 / CP4).